A 228-amino-acid chain; its full sequence is 2,3-bisphosphoglycerate-dependent phosphoglycerate mutase (228 aa).

Residues 8-15, 21-22, Arg60, 87-90, Lys98, 114-115, and 183-184 each bind substrate; these read RHGLSEWN, TG, ERHY, RR, and GN. Residue His9 is the Tele-phosphohistidine intermediate of the active site. Residue Glu87 is the Proton donor/acceptor of the active site.

It belongs to the phosphoglycerate mutase family. BPG-dependent PGAM subfamily.

The enzyme catalyses (2R)-2-phosphoglycerate = (2R)-3-phosphoglycerate. The protein operates within carbohydrate degradation; glycolysis; pyruvate from D-glyceraldehyde 3-phosphate: step 3/5. Its function is as follows. Catalyzes the interconversion of 2-phosphoglycerate and 3-phosphoglycerate. The chain is 2,3-bisphosphoglycerate-dependent phosphoglycerate mutase from Enterococcus faecalis (strain ATCC 700802 / V583).